An 883-amino-acid polypeptide reads, in one-letter code: Envelope glycoprotein B (883 aa).

Residues 1–31 (MQSYIAVNIDMASLKMLICVCVAILIPSTLS) form the signal peptide. Topologically, residues 32–750 (QDSHGIAGII…SGIASFLSNP (719 aa)) are virion surface. Disulfide bonds link Cys-77–Cys-535, Cys-94–Cys-491, Cys-167–Cys-229, Cys-321–Cys-369, and Cys-558–Cys-608. N-linked (GlcNAc...) asparagine; by host glycans are attached at residues Asn-102 and Asn-121. The segment at 134 to 140 (TWALFSR) is involved in fusion and/or binding to host membrane. A glycan (N-linked (GlcNAc...) asparagine; by host) is linked at Asn-211. An involved in fusion and/or binding to host membrane region spans residues 216–223 (HQTLGYRT). N-linked (GlcNAc...) asparagine; by host glycosylation is found at Asn-262 and Asn-360. The disordered stretch occupies residues 428 to 457 (QNHLPRGRERRQAAGRRTASLQSGPQGDRI). Residues Asn-579, Asn-635, and Asn-649 are each glycosylated (N-linked (GlcNAc...) asparagine; by host). Hydrophobic membrane proximal region stretches follow at residues 694 to 748 (IDTV…SFLS) and 724 to 744 (ALGT…SGIA). The chain crosses the membrane as a helical span at residues 751-771 (FAALGIGIAVVVSIILGLLAF). Over 772 to 883 (KYVMNLKSNP…PSWAEESEDE (112 aa)) the chain is Intravirion. The disordered stretch occupies residues 791-817 (PPAGTPPRPSRRYYKDEEEVEEDSDED). Residues 806-817 (DEEEVEEDSDED) are compositionally biased toward acidic residues. The Internalization motif signature appears at 868–871 (YPLL).

Belongs to the herpesviridae glycoprotein B family. As to quaternary structure, homotrimer; disulfide-linked. Binds to heparan sulfate proteoglycans. Interacts with gH/gL heterodimer. A proteolytic cleavage by host furin generates two subunits that remain linked by disulfide bonds.

Its subcellular location is the virion membrane. It localises to the host cell membrane. The protein localises to the host endosome membrane. The protein resides in the host Golgi apparatus membrane. Functionally, envelope glycoprotein that forms spikes at the surface of virion envelope. Essential for the initial attachment to heparan sulfate moieties of the host cell surface proteoglycans. Involved in fusion of viral and cellular membranes leading to virus entry into the host cell. Following initial binding to its host receptors, membrane fusion is mediated by the fusion machinery composed at least of gB and the heterodimer gH/gL. May be involved in the fusion between the virion envelope and the outer nuclear membrane during virion egress. This chain is Envelope glycoprotein B, found in Gallus gallus (Chicken).